Here is a 471-residue protein sequence, read N- to C-terminus: Putative ABC transporter ATP-binding protein STK_11360 (471 aa).

ABC transporter domains follow at residues 4 to 241 (LEIK…LEPL) and 255 to 470 (VILE…VIKD). Residues 37–44 (GKSGSGKS) and 286–293 (GDNGSGKS) each bind ATP.

The protein belongs to the ABC transporter superfamily.

It is found in the cell membrane. In terms of biological role, probably part of an ABC transporter complex. Responsible for energy coupling to the transport system. This chain is Putative ABC transporter ATP-binding protein STK_11360, found in Sulfurisphaera tokodaii (strain DSM 16993 / JCM 10545 / NBRC 100140 / 7) (Sulfolobus tokodaii).